Consider the following 591-residue polypeptide: Nuclear receptor subfamily 4 group A member 2 (591 aa).

Disordered stretches follow at residues Met-1–Tyr-22 and Ser-110–Pro-133. A compositionally biased stretch (low complexity) spans Tyr-8 to Tyr-22. The nuclear receptor DNA-binding region spans Glu-253 to Thr-328. 2 consecutive NR C4-type zinc fingers follow at residues Cys-256 to Cys-276 and Cys-292 to Cys-311. The Bipartite nuclear localization signal (NLS1) motif lies at Phe-280–Arg-307. The interval Ser-330–Pro-354 is disordered. A Nuclear localization signal (NLS1) motif is present at residues Leu-331–Lys-343. A compositionally biased stretch (pro residues) spans Pro-345–Pro-354. The NR LBD domain maps to Pro-353–Thr-588. The nuclear export sequence (NES1) signature appears at Phe-436 to Ala-445. The nuclear export sequence (NES2) motif lies at Gln-561 to Lys-570.

This sequence belongs to the nuclear hormone receptor family.

It localises to the cytoplasm. The protein resides in the nucleus. Its function is as follows. Transcriptional regulator which may play a role in the differentiation and maintenance of meso-diencephalic dopaminergic (mdDA) neurons. This chain is Nuclear receptor subfamily 4 group A member 2 (nr4a2), found in Xenopus tropicalis (Western clawed frog).